A 141-amino-acid polypeptide reads, in one-letter code: Cholinesterase (141 aa).

The N-linked (GlcNAc...) asparagine glycan is linked to asparagine 39. Position 49–50 (49–50) interacts with substrate; that stretch reads GG. Serine 131 functions as the Acyl-ester intermediate in the catalytic mechanism. Serine 131 bears the Phosphoserine mark.

This sequence belongs to the type-B carboxylesterase/lipase family. In terms of assembly, homotetramer; disulfide-linked. Dimer of dimers. As to expression, present in most cells except erythrocytes.

It localises to the secreted. It carries out the reaction an acylcholine + H2O = a carboxylate + choline + H(+). Its function is as follows. Esterase with broad substrate specificity. Contributes to the inactivation of the neurotransmitter acetylcholine. Can degrade neurotoxic organophosphate esters. The protein is Cholinesterase (BCHE) of Macaca mulatta (Rhesus macaque).